Consider the following 517-residue polypeptide: Bifunctional purine biosynthesis protein PurH (517 aa).

In terms of domain architecture, MGS-like spans 1–145; it reads MSPLALVSVS…KNHKDVSVLV (145 aa).

The protein belongs to the PurH family.

The catalysed reaction is (6R)-10-formyltetrahydrofolate + 5-amino-1-(5-phospho-beta-D-ribosyl)imidazole-4-carboxamide = 5-formamido-1-(5-phospho-D-ribosyl)imidazole-4-carboxamide + (6S)-5,6,7,8-tetrahydrofolate. It carries out the reaction IMP + H2O = 5-formamido-1-(5-phospho-D-ribosyl)imidazole-4-carboxamide. Its pathway is purine metabolism; IMP biosynthesis via de novo pathway; 5-formamido-1-(5-phospho-D-ribosyl)imidazole-4-carboxamide from 5-amino-1-(5-phospho-D-ribosyl)imidazole-4-carboxamide (10-formyl THF route): step 1/1. It participates in purine metabolism; IMP biosynthesis via de novo pathway; IMP from 5-formamido-1-(5-phospho-D-ribosyl)imidazole-4-carboxamide: step 1/1. In Prochlorococcus marinus (strain MIT 9301), this protein is Bifunctional purine biosynthesis protein PurH.